The primary structure comprises 142 residues: Cellulose/chitin binding protein BQ2027_MB2009 (142 aa).

The signal sequence occupies residues 1–37; the sequence is MAGLNIYVRRWRTALHATVSALIVAILGLAITPVASA. In terms of domain architecture, CBM2 spans 38–142; sequence ATARATLSVT…CLLNGQYPCT (105 aa).

It localises to the secreted. Its subcellular location is the cell wall. It is found in the cell membrane. Carbohydrate binding protein that binds chitin and cellulose. Lacks enzymatic activity and does not hydrolyze chitin and cellulose. May interact with mycobacterial biofilms, which are rich in cellulose, and play a role in biofilm formation. Could also act as an adhesin, improving the initial attachment to host cells and aiding M.bovis during the initial stages of infection. Functionally, may act as a virulence factor that modulates host immune responses and contributes to host immune evasion. This is Cellulose/chitin binding protein BQ2027_MB2009 from Mycobacterium bovis (strain ATCC BAA-935 / AF2122/97).